The following is a 593-amino-acid chain: DEAD-box ATP-dependent RNA helicase 18 (593 aa).

The short motif at 16 to 44 (FSDLEPPLSGDIIEALNQSDFEFCTPVQA) is the Q motif element. In terms of domain architecture, Helicase ATP-binding spans 47–226 (IPLLCSYKDV…KAGLRNPVRV (180 aa)). 60 to 67 (AATGSGKT) is an ATP binding site. Residues 174 to 177 (DEAD) carry the DEAD box motif. In terms of domain architecture, Helicase C-terminal spans 264–411 (QLVDLLIKNS…ERKCSEDASD (148 aa)). A compositionally biased stretch (basic and acidic residues) spans 506–524 (QRQQNLQVRKEKRQEEKKE). The segment at 506-561 (QRQQNLQVRKEKRQEEKKEKGKRKRVDASASNDPKKASRKLTGKQRQTIQTAEDEE) is disordered.

The protein belongs to the DEAD box helicase family. DDX55/SPB4 subfamily.

It carries out the reaction ATP + H2O = ADP + phosphate + H(+). The chain is DEAD-box ATP-dependent RNA helicase 18 (RH18) from Arabidopsis thaliana (Mouse-ear cress).